The primary structure comprises 440 residues: Ultraviolet-B receptor UVR8 (440 aa).

Position 2 is an N-acetylalanine (Ala-2). RCC1 repeat units lie at residues 2 to 31, 32 to 84, 86 to 137, 139 to 189, 190 to 241, 243 to 293, 294 to 345, and 347 to 399; these read AEDM…VALL, SGDI…AYSQ, GMEV…AVTM, GEVQ…AVTE, DGDL…SVSY, GALY…ALTS, DGKL…AVTE, and NNVF…SGKS. The required for interaction with COP1 stretch occupies residues 397-423; the sequence is GKSWVSPAERYAVVPDETGLTDGSSKG. A disordered region spans residues 413–440; that stretch reads ETGLTDGSSKGNGGDISVPQTDVKRVRI.

As to quaternary structure, homodimer in the absence of UV-B, but absorption of UV-B induces monomerization of UVR8 and interaction with COP1. Interacts with RUP1, RUP2 and histone H2B.

The protein resides in the nucleus. It is found in the cytoplasm. The protein localises to the cytosol. UV-B specific signaling component that acts as a UV-B photoreceptor and plays a key role in establishing UV-protective responses in plants. Upon UV-B irradiation, UVR8 undergoes an immediate switch from homodimer to monomer, accumulates in the nucleus, interacts with the photomorphogenic repressor COP1 and regulates the expression of the transcription factor HY5 by associating with chromatin (through histone H2B binding) in the HY5 promoter region. UVR8 is involved in controlling aspects of leaf growth and morphogenesis in response to UV-B, is required for normal progression of endocycle and has a regulatory role in stomatal differentiation. Is required for plant circadian clock response to photomorphogenic UV-B light, partly through the transcriptional activation of responsive clock genes. Promotes photosynthetic efficiency at elevated levels of UV-B. Plays a role in mediating the effects of UV-B radiation on pathogen resistance by controlling the expression of the sinapate biosynthetic pathway. The two tryptophans, Trp-285 and Trp-233, serve collectively as the UV-B chromophore. This chain is Ultraviolet-B receptor UVR8, found in Arabidopsis thaliana (Mouse-ear cress).